Reading from the N-terminus, the 1438-residue chain is Pyochelin synthetase PchE (1438 aa).

Positions 6–85 constitute a Carrier 1 domain; the sequence is DSRTALRDWL…AWLDLLACAD (80 aa). Ser-46 bears the O-(pantetheine 4'-phosphoryl)serine mark. The condensation/cyclization stretch occupies residues 136–442; it reads RTRDVDPQRL…ARRQGQPRSA (307 aa). An adenylation region spans residues 563-950; it reads RAAEAPDADA…GRVDQQVKVR (388 aa). Residues 1350 to 1425 form the Carrier 2 domain; sequence EPLEAHEQAL…GLARHLQAQT (76 aa). Ser-1385 is modified (O-(pantetheine 4'-phosphoryl)serine).

This sequence belongs to the NRP synthetase family. Pantetheine 4'-phosphate is required as a cofactor.

The enzyme catalyses holo-[peptidyl-carrier protein] + L-cysteine + ATP = L-cysteinyl-[peptidyl-carrier protein] + AMP + diphosphate. It participates in siderophore biosynthesis. The protein operates within antifungal biosynthesis. Its function is as follows. Involved in the biosynthesis of the siderophore pyochelin. Accepts salicylate activated by PchD at the first peptidyl carrier domain (ArCP), and activates and fixes one molecule of cysteine at the second peptidyl carrier domain (PCP1) via a thioester linkage to the phosphopanthetheine moiety. Then catalyzes the condensation reaction between the salicylate bound to the first site and the cysteine bound to the second site, and the cyclization of the cysteine to form the salicyl-thiazolinyl-S-PCP1 intermediate at the second site. When this intermediate is released by the action of a thioesterase, it produces the antifungal antibiotic dihydroaeruginoic acid (Dha or hydroxyphenyl-thiazolinyl-carboxylate). This is Pyochelin synthetase PchE from Pseudomonas aeruginosa (strain UCBPP-PA14).